Consider the following 72-residue polypeptide: Cytochrome c oxidase copper chaperone 2 (72 aa).

Cysteine 32 and cysteine 33 together coordinate Cu cation. The 41-residue stretch at 32–72 (CCACPDTKKLRDECIVEHGESACTKWIEAHILCLRSEGFKV) folds into the CHCH domain. 2 consecutive short sequence motifs (cx9C motif) follow at residues 35 to 45 (CPDTKKLRDEC) and 54 to 64 (CTKWIEAHILC). 2 disulfide bridges follow: cysteine 35–cysteine 64 and cysteine 45–cysteine 54.

This sequence belongs to the COX17 family.

It localises to the mitochondrion intermembrane space. Copper chaperone for cytochrome c oxidase (COX). Binds 2 copper ions and delivers them to the Cu(A) site of COX. The polypeptide is Cytochrome c oxidase copper chaperone 2 (COX17-2) (Arabidopsis thaliana (Mouse-ear cress)).